A 353-amino-acid polypeptide reads, in one-letter code: UDP-3-O-acylglucosamine N-acyltransferase (353 aa).

His-258 acts as the Proton acceptor in catalysis.

The protein belongs to the transferase hexapeptide repeat family. LpxD subfamily. As to quaternary structure, homotrimer.

The enzyme catalyses a UDP-3-O-[(3R)-3-hydroxyacyl]-alpha-D-glucosamine + a (3R)-hydroxyacyl-[ACP] = a UDP-2-N,3-O-bis[(3R)-3-hydroxyacyl]-alpha-D-glucosamine + holo-[ACP] + H(+). Its pathway is bacterial outer membrane biogenesis; LPS lipid A biosynthesis. Its function is as follows. Catalyzes the N-acylation of UDP-3-O-acylglucosamine using 3-hydroxyacyl-ACP as the acyl donor. Is involved in the biosynthesis of lipid A, a phosphorylated glycolipid that anchors the lipopolysaccharide to the outer membrane of the cell. In Parvibaculum lavamentivorans (strain DS-1 / DSM 13023 / NCIMB 13966), this protein is UDP-3-O-acylglucosamine N-acyltransferase.